A 455-amino-acid chain; its full sequence is Secreted triacylglycerol lipase LIP4 (455 aa).

An N-terminal signal peptide occupies residues 1–19 (MKLNLFILGLLTLAAHAYA). The N-linked (GlcNAc...) asparagine glycan is linked to Asn98. Cys115 and Cys284 form a disulfide bridge. The active-site Nucleophile is Ser197. Asn230 carries N-linked (GlcNAc...) asparagine glycosylation. Active-site residues include Asp344 and His378. An intrachain disulfide couples Cys360 to Cys406.

It belongs to the AB hydrolase superfamily. Lipase family. Class Lip subfamily.

The protein localises to the secreted. It is found in the cell wall. The enzyme catalyses a triacylglycerol + H2O = a diacylglycerol + a fatty acid + H(+). It catalyses the reaction a monoacylglycerol + H2O = glycerol + a fatty acid + H(+). It carries out the reaction a diacylglycerol + H2O = a monoacylglycerol + a fatty acid + H(+). Functionally, secreted lipase involved in Dandruff and seborrheic dermatitis (D/SD) probably via lipase-mediated breakdown of sebaceous lipids and release of irritating free fatty acids. Has triacylglycerol lipase activity and is able to hydrolyze triolein. Mostly converts monoolein to di- and triolein, while free fatty acids are only produced in low amounts. This chain is Secreted triacylglycerol lipase LIP4, found in Malassezia globosa (strain ATCC MYA-4612 / CBS 7966) (Dandruff-associated fungus).